The following is a 197-amino-acid chain: GTP cyclohydrolase 1 (197 aa).

3 residues coordinate Zn(2+): cysteine 85, histidine 88, and cysteine 156.

The protein belongs to the GTP cyclohydrolase I family. As to quaternary structure, toroid-shaped homodecamer, composed of two pentamers of five dimers.

The enzyme catalyses GTP + H2O = 7,8-dihydroneopterin 3'-triphosphate + formate + H(+). Its pathway is cofactor biosynthesis; 7,8-dihydroneopterin triphosphate biosynthesis; 7,8-dihydroneopterin triphosphate from GTP: step 1/1. This Mesorhizobium japonicum (strain LMG 29417 / CECT 9101 / MAFF 303099) (Mesorhizobium loti (strain MAFF 303099)) protein is GTP cyclohydrolase 1.